Consider the following 505-residue polypeptide: MKRTPTAEEREREAKKLRLLEELEDTWLPYLTPKDDEFYQQWQLKYPKLILREASSVSEELHKEVQEAFLTMHKHGCLFRDLVRIQGKDLLTPVSRILIGNPGCTYKYLNTRLFTVPWPVKGSNIKHTEAEIAAACETFLKLNDYLQIETIQALEELAAKEKANEDTVPLCMSADFPRVGMGSSYNGQDEVDIKSRAAYNVTLLNFMDPQKMPYLKEEPYFGMGKMAVSWHHDENLVDRSAVAVYSYSCEGPEEESEDDSHLEGRDPDIWHVGFKISWDIETPGLAIPLHQGDCYFMLDDLNATHQHCVLAGSQPRFSSTHRVAECSTGTLDYILQRCQLAPQNVRDDVENDDVSLKSFEPAVLKQGEEIHNEVEFEWLRQFWFQGNRYRKCTDWWCQPMAQLEALWKKMEAVTNAVLHEVKREGLPVEQRNEILTAILASLTARQNLRREWHARCQSRIARTLPADQKPECRPYWEKDDVSMPLPFDLTDIVSELRGQLLEAKP.

Thr-4 carries the post-translational modification Phosphothreonine. The interval 32-327 (TPKDDEFYQQ…SSTHRVAECS (296 aa)) is fe2OG dioxygenase domain. Substrate is bound by residues Arg-96 and Tyr-108. Residue Asn-205 participates in 2-oxoglutarate binding. The segment at 213–224 (PYLKEEPYFGMG) is loop L1; predicted to block binding of double-stranded DNA or RNA. Position 216 is an N6-acetyllysine (Lys-216). Positions 231 and 233 each coordinate Fe cation. 231–234 (HHDE) contributes to the substrate binding site. Tyr-295 is a binding site for 2-oxoglutarate. His-307 contacts Fe cation. 2-oxoglutarate is bound by residues 316 to 318 (RFS), Thr-320, and Arg-322.

This sequence belongs to the fto family. In terms of assembly, monomer. May also exist as homodimer. It depends on Fe(2+) as a cofactor.

It localises to the nucleus. The protein resides in the nucleus speckle. The protein localises to the cytoplasm. The enzyme catalyses a 5'-end (N(7)-methyl 5'-triphosphoguanosine)-(N(6),2'-O-dimethyladenosine) in mRNA + 2-oxoglutarate + O2 = a 5'-end (N(7)-methyl 5'-triphosphoguanosine)-(2'-O-methyladenosine) in mRNA + formaldehyde + succinate + CO2. It carries out the reaction an N(6)-methyladenosine in mRNA + 2-oxoglutarate + O2 = an adenosine in mRNA + formaldehyde + succinate + CO2. The catalysed reaction is N(6)-methyladenosine in U6 snRNA + 2-oxoglutarate + O2 = adenosine in U6 snRNA + formaldehyde + succinate + CO2. It catalyses the reaction a 5'-end (N(7)-methyl 5'-triphosphoguanosine)-(N(6),2'-O-dimethyladenosine) in U6 snRNA + 2-oxoglutarate + O2 = a 5'-end (N(7)-methyl 5'-triphosphoguanosine)-(2'-O-methyladenosine) in U6 snRNA + formaldehyde + succinate + CO2. The enzyme catalyses an N(1)-methyladenosine in tRNA + 2-oxoglutarate + O2 = an adenosine in tRNA + formaldehyde + succinate + CO2. Activated by ascorbate. Inhibited by N-oxalylglycine, fumarate and succinate. RNA demethylase that mediates oxidative demethylation of different RNA species, such as mRNAs, tRNAs and snRNAs, and acts as a regulator of fat mass, adipogenesis and energy homeostasis. Specifically demethylates N(6)-methyladenosine (m6A) RNA, the most prevalent internal modification of messenger RNA (mRNA) in higher eukaryotes. M6A demethylation by FTO affects mRNA expression and stability. Also able to demethylate m6A in U6 small nuclear RNA (snRNA). Mediates demethylation of N(6),2'-O-dimethyladenosine cap (m6A(m)), by demethylating the N(6)-methyladenosine at the second transcribed position of mRNAs and U6 snRNA. Demethylation of m6A(m) in the 5'-cap by FTO affects mRNA stability by promoting susceptibility to decapping. Also acts as a tRNA demethylase by removing N(1)-methyladenine from various tRNAs. Has no activity towards 1-methylguanine. Has no detectable activity towards double-stranded DNA. Also able to repair alkylated DNA and RNA by oxidative demethylation: demethylates single-stranded RNA containing 3-methyluracil, single-stranded DNA containing 3-methylthymine and has low demethylase activity towards single-stranded DNA containing 1-methyladenine or 3-methylcytosine. Ability to repair alkylated DNA and RNA is however unsure in vivo. Involved in the regulation of fat mass, adipogenesis and body weight, thereby contributing to the regulation of body size and body fat accumulation. Involved in the regulation of thermogenesis and the control of adipocyte differentiation into brown or white fat cells. Regulates activity of the dopaminergic midbrain circuitry via its ability to demethylate m6A in mRNAs. The chain is Alpha-ketoglutarate-dependent dioxygenase FTO from Pongo abelii (Sumatran orangutan).